The chain runs to 456 residues: Enolase (456 aa).

A (2R)-2-phosphoglycerate-binding site is contributed by Q164. E207 functions as the Proton donor in the catalytic mechanism. Mg(2+)-binding residues include D244, E287, and D314. Positions 339, 368, 369, and 390 each coordinate (2R)-2-phosphoglycerate. Residue K339 is the Proton acceptor of the active site.

The protein belongs to the enolase family. In terms of assembly, component of the RNA degradosome, a multiprotein complex involved in RNA processing and mRNA degradation. It depends on Mg(2+) as a cofactor.

It localises to the cytoplasm. The protein resides in the secreted. The protein localises to the cell surface. The catalysed reaction is (2R)-2-phosphoglycerate = phosphoenolpyruvate + H2O. Its pathway is carbohydrate degradation; glycolysis; pyruvate from D-glyceraldehyde 3-phosphate: step 4/5. Catalyzes the reversible conversion of 2-phosphoglycerate (2-PG) into phosphoenolpyruvate (PEP). It is essential for the degradation of carbohydrates via glycolysis. This chain is Enolase, found in Francisella tularensis subsp. holarctica (strain OSU18).